The sequence spans 372 residues: Cytochrome b (372 aa).

The next 4 helical transmembrane spans lie at 25–45 (FGSMLLTCSALQIMTGFFLAV), 69–90 (WMMQNLHAIGASMFFICIYIHM), 105–125 (WLSGTTLLIMLMATAFFGYVL), and 170–190 (FFALHFILPFGIISLSSLHIM). Residues H75 and H89 each coordinate heme b. Heme b contacts are provided by H174 and H188. Position 193 (H193) interacts with a ubiquinone. 4 helical membrane passes run 218–238 (YKDLFMISSMIMIMLLTISFL), 280–300 (LGGALALAMSIMILLTVPFTH), 312–332 (FMQLMFWTLMATFIIITWTAT), and 339–358 (YTTISQVASTLYFMFFMSNL).

The protein belongs to the cytochrome b family. In terms of assembly, the cytochrome bc1 complex contains 3 respiratory subunits (MT-CYB, CYC1 and UQCRFS1), 2 core proteins (UQCRC1 and UQCRC2) and probably 6 low-molecular weight proteins. Heme b is required as a cofactor.

Its subcellular location is the mitochondrion inner membrane. Functionally, component of the ubiquinol-cytochrome c reductase complex (complex III or cytochrome b-c1 complex) that is part of the mitochondrial respiratory chain. The b-c1 complex mediates electron transfer from ubiquinol to cytochrome c. Contributes to the generation of a proton gradient across the mitochondrial membrane that is then used for ATP synthesis. This is Cytochrome b (MT-CYB) from Sanzinia madagascariensis (Madagascar tree boa).